A 519-amino-acid chain; its full sequence is ATP synthase subunit beta, mitochondrial (519 aa).

The transit peptide at 1–21 directs the protein to the mitochondrion; the sequence is MLTRFRSAVLRGAVSITGARA. Residues 184–191 and Arg-216 each bind ATP; that span reads GAGVGKTV.

This sequence belongs to the ATPase alpha/beta chains family. As to quaternary structure, F-type ATPases have 2 components, F(1) - the catalytic core - and F(o) - the membrane proton channel. F(1) has five subunits: alpha(3), beta(3), gamma(1), delta(1), epsilon(1), plus the additional subunit P18 (Tb427.05.1710) that is not present in F(1)F(o) ATP synthase from metazoa. Subunit P18 (Tb927.5.1710) interacts with the alpha subunit with a 1:1 stoichiometry; the interaction is direct. Subunit gamma is part of the central stalk. F(o) has three main subunits: a, b and c. The trypanosomal ATPase complex contains additional subunits that are not present in the F(1)F(o) ATP synthase from metazoa.

The protein resides in the mitochondrion. Its subcellular location is the mitochondrion inner membrane. It carries out the reaction ATP + H2O + 4 H(+)(in) = ADP + phosphate + 5 H(+)(out). In terms of biological role, mitochondrial membrane ATP synthase (F(1)F(o) ATP synthase) produces ATP from ADP in the presence of a proton gradient across the membrane which is generated by electron transport complexes of the respiratory chain. F-type ATPases consist of two structural domains, F(1) - containing the extramembraneous catalytic core, and F(o) - containing the membrane proton channel, linked together by a central stalk and a peripheral stalk. During catalysis, ATP synthesis in the catalytic domain of F(1) is coupled via a rotary mechanism of the central stalk subunits to proton translocation. Subunits alpha and beta form the catalytic core in F(1). Rotation of the central stalk against the surrounding alpha(3)beta(3) subunits leads to hydrolysis of ATP in three separate catalytic sites on the beta subunits. Contrary to the procyclic, insect form that requires F(1)F(o) ATP synthase for ATP synthesis, the bloodstream form relies on ATP hydrolysis by F(1)F(o) ATP synthase to maintain its mitochondrial membrane potential. The polypeptide is ATP synthase subunit beta, mitochondrial (Trypanosoma brucei brucei).